Reading from the N-terminus, the 408-residue chain is DNA-directed RNA polymerase subunit Rpo1C (408 aa).

The protein belongs to the RNA polymerase beta' chain family. Part of the RNA polymerase complex.

Its subcellular location is the cytoplasm. It carries out the reaction RNA(n) + a ribonucleoside 5'-triphosphate = RNA(n+1) + diphosphate. In terms of biological role, DNA-dependent RNA polymerase (RNAP) catalyzes the transcription of DNA into RNA using the four ribonucleoside triphosphates as substrates. Forms part of the jaw domain. The protein is DNA-directed RNA polymerase subunit Rpo1C of Methanosarcina mazei (strain ATCC BAA-159 / DSM 3647 / Goe1 / Go1 / JCM 11833 / OCM 88) (Methanosarcina frisia).